We begin with the raw amino-acid sequence, 480 residues long: uncharacterized protein (480 aa).

The segment at 1-20 is disordered; that stretch reads MDVKDTGINRSDTPISDQDH.

This is an uncharacterized protein from Arabidopsis thaliana (Mouse-ear cress).